We begin with the raw amino-acid sequence, 445 residues long: Lipoyl synthase, mitochondrial (445 aa).

The transit peptide at 1 to 40 (MRPGSWRVITHYGFTGPIQRLQAPLRRSLARAAALSTRSY) directs the protein to the mitochondrion. Residues 42-71 (TIPSAPSSQPTSQESSPAASASASASAPAT) show a composition bias toward low complexity. Residues 42–77 (TIPSAPSSQPTSQESSPAASASASASAPATKPRPTY) form a disordered region. The [4Fe-4S] cluster site is built by C157, C162, C168, C188, C192, C195, and S405. In terms of domain architecture, Radical SAM core spans 171-394 (GSNKAAATAT…RQRALDMGFL (224 aa)).

The protein belongs to the radical SAM superfamily. Lipoyl synthase family. [4Fe-4S] cluster serves as cofactor.

Its subcellular location is the mitochondrion. The enzyme catalyses [[Fe-S] cluster scaffold protein carrying a second [4Fe-4S](2+) cluster] + N(6)-octanoyl-L-lysyl-[protein] + 2 oxidized [2Fe-2S]-[ferredoxin] + 2 S-adenosyl-L-methionine + 4 H(+) = [[Fe-S] cluster scaffold protein] + N(6)-[(R)-dihydrolipoyl]-L-lysyl-[protein] + 4 Fe(3+) + 2 hydrogen sulfide + 2 5'-deoxyadenosine + 2 L-methionine + 2 reduced [2Fe-2S]-[ferredoxin]. It functions in the pathway protein modification; protein lipoylation via endogenous pathway; protein N(6)-(lipoyl)lysine from octanoyl-[acyl-carrier-protein]: step 2/2. Its function is as follows. Catalyzes the radical-mediated insertion of two sulfur atoms into the C-6 and C-8 positions of the octanoyl moiety bound to the lipoyl domains of lipoate-dependent enzymes, thereby converting the octanoylated domains into lipoylated derivatives. The polypeptide is Lipoyl synthase, mitochondrial (Sordaria macrospora (strain ATCC MYA-333 / DSM 997 / K(L3346) / K-hell)).